Here is a 428-residue protein sequence, read N- to C-terminus: Histidine--tRNA ligase (428 aa).

The protein belongs to the class-II aminoacyl-tRNA synthetase family. In terms of assembly, homodimer.

The protein localises to the cytoplasm. It carries out the reaction tRNA(His) + L-histidine + ATP = L-histidyl-tRNA(His) + AMP + diphosphate + H(+). The polypeptide is Histidine--tRNA ligase (Mesomycoplasma hyopneumoniae (strain J / ATCC 25934 / NCTC 10110) (Mycoplasma hyopneumoniae)).